The sequence spans 707 residues: Serine/threonine protein kinase UL97 (707 aa).

The segment covering 1-14 has biased composition (low complexity); the sequence is MSSALRSRARSASL. 4 disordered regions span residues 1 to 33, 113 to 146, 176 to 198, and 231 to 264; these read MSSA…SRAR, DGEK…GDGY, FTGG…RPLR, and ESQD…EADS. Over residues 113–127 the composition is skewed to basic and acidic residues; it reads DGEKEDAASDKENLR. Over residues 178-188 the composition is skewed to low complexity; it reads GGSDPSDSVSG. ATP contacts are provided by residues 337 to 345 and K359; that span reads LGQGSFGEV. The active-site Proton acceptor is the D456.

It belongs to the protein kinase superfamily. Tyr protein kinase family. HCMV ganciclovir subfamily. Interacts with UL83. Post-translationally, autophosphorylates on serine and threonine residues.

The protein resides in the virion. The catalysed reaction is L-seryl-[protein] + ATP = O-phospho-L-seryl-[protein] + ADP + H(+). The enzyme catalyses L-threonyl-[protein] + ATP = O-phospho-L-threonyl-[protein] + ADP + H(+). Its function is as follows. Serine/threonine protein kinase that plays important roles in several processes including nuclear viral egress, viral replication or regulation of host cell cycle progression. Participates in the acquisition of tegument during virion morphogenesis in the nucleus. Phosphorylates the viral nuclear egress complex (NEC) subunits UL50 and UL53. Redistributes the host nuclear lamina by phosphorylating cellular Lamins-A/C. Plays a role in viral DNA synthesis by phosphorylating the DNA polymerase processivity factor UL44. Stimulates host cell cycle to support viral DNA synthesis by phosphorylating host retinoblastoma/RB1 protein. Additional substrates have been identified including host EF1D or H2B. Also phosphorylates host SAMHD1 and thereby counteracts its antiviral effect by reducing its dNTP hydrolase activity. This chain is Serine/threonine protein kinase UL97 (UL97), found in Human cytomegalovirus (strain AD169) (HHV-5).